We begin with the raw amino-acid sequence, 697 residues long: Histone-lysine N-methyltransferase SETDB2 (697 aa).

The region spanning 172-242 (LKKENPLNLP…DNFSFSTQVQ (71 aa)) is the MBD domain. The Pre-SET domain occupies 304 to 378 (KCCSCTDGCL…LCQNRVVQHG (75 aa)). Zn(2+) is bound by residues Cys306, Cys308, Cys312, Cys318, Cys320, Cys359, Cys363, Cys365, and Cys370. Residues 381-672 (LRLQVFKTDT…AGTELTWDYN (292 aa)) enclose the SET domain. 391-393 (KGW) contacts S-adenosyl-L-methionine. Disordered stretches follow at residues 438-461 (KEDNGSTSTLMLSKRKRKPSHSDS) and 529-605 (VHNS…STSP). Low complexity predominate over residues 565–581 (SGYVSEESSSSVISGGH). S-adenosyl-L-methionine contacts are provided by residues Arg626 and 629–630 (NH). Zn(2+)-binding residues include Cys632, Cys685, Cys687, and Cys692.

The protein belongs to the class V-like SAM-binding methyltransferase superfamily.

The protein localises to the nucleus. The protein resides in the chromosome. It carries out the reaction N(6),N(6)-dimethyl-L-lysyl(9)-[histone H3] + S-adenosyl-L-methionine = N(6),N(6),N(6)-trimethyl-L-lysyl(9)-[histone H3] + S-adenosyl-L-homocysteine + H(+). Its function is as follows. Histone methyltransferase involved in left-right axis specification in early development and mitosis. Specifically trimethylates 'Lys-9' of histone H3 (H3K9me3). H3K9me3 represents a specific tag for epigenetic transcriptional repression by recruiting HP1 (CBX1, CBX3 and/or CBX5) proteins to methylated histones. Contributes to H3K9me3 in both the interspersed repetitive elements and centromere-associated repeats. Plays a role in chromosome condensation and segregation during mitosis. The protein is Histone-lysine N-methyltransferase SETDB2 (setdb2) of Xenopus tropicalis (Western clawed frog).